A 313-amino-acid polypeptide reads, in one-letter code: DNA-directed RNA polymerase subunit alpha (313 aa).

The segment at 1 to 226 (MLEIEKPKIE…EHMRLFLGLT (226 aa)) is alpha N-terminal domain (alpha-NTD). Positions 242–313 (TRDRLMDMSI…LGLSLRSSEE (72 aa)) are alpha C-terminal domain (alpha-CTD).

It belongs to the RNA polymerase alpha chain family. As to quaternary structure, homodimer. The RNAP catalytic core consists of 2 alpha, 1 beta, 1 beta' and 1 omega subunit. When a sigma factor is associated with the core the holoenzyme is formed, which can initiate transcription.

The enzyme catalyses RNA(n) + a ribonucleoside 5'-triphosphate = RNA(n+1) + diphosphate. DNA-dependent RNA polymerase catalyzes the transcription of DNA into RNA using the four ribonucleoside triphosphates as substrates. The sequence is that of DNA-directed RNA polymerase subunit alpha from Moorella thermoacetica (strain ATCC 39073 / JCM 9320).